The chain runs to 300 residues: Ribosomal RNA small subunit methyltransferase H (300 aa).

Residues 36-38, Asp-55, Leu-89, Asp-103, and Gln-110 each bind S-adenosyl-L-methionine; that span reads GGH.

Belongs to the methyltransferase superfamily. RsmH family.

The protein resides in the cytoplasm. The catalysed reaction is cytidine(1402) in 16S rRNA + S-adenosyl-L-methionine = N(4)-methylcytidine(1402) in 16S rRNA + S-adenosyl-L-homocysteine + H(+). In terms of biological role, specifically methylates the N4 position of cytidine in position 1402 (C1402) of 16S rRNA. The protein is Ribosomal RNA small subunit methyltransferase H of Thermotoga neapolitana (strain ATCC 49049 / DSM 4359 / NBRC 107923 / NS-E).